Reading from the N-terminus, the 135-residue chain is UPF0355 protein SE_2351 (135 aa).

Belongs to the UPF0355 family.

This is UPF0355 protein SE_2351 from Staphylococcus epidermidis (strain ATCC 12228 / FDA PCI 1200).